We begin with the raw amino-acid sequence, 328 residues long: MSSIHKLLTGIYIHKNFLRPRAALPPFVGNHCVDYSSSSLQKKVTSVDRASQQGKTEEGLQGHDHKEVALDAPSPDRTPEVSFDKAIRDEAIEHFRRLKDEIVAHLRGPDGRPLQEVIMEQARVVWQFREKEDLDKWIVTSDKTIGGRSEIFLKMSKNNRSALLYGTLSSEPPQDGDSRQSGYCAMISRIPRGAFERKLSYDWSQFNTLYLRVRGDGRPWMVNIRQDTEFIQRKNQMYSYFMFTRGGPYWQEVKIPFSKFFFSNQGRVRDVQGPLVLDKISSIGFTLSDKVDGPFFLEIDFIGVFTDPAHTEEFAYENSPVLNPRLFR.

Residues 1–24 (MSSIHKLLTGIYIHKNFLRPRAAL) constitute a mitochondrion transit peptide. Polar residues predominate over residues 44–54 (VTSVDRASQQG). A disordered region spans residues 44–80 (VTSVDRASQQGKTEEGLQGHDHKEVALDAPSPDRTPE). Residues 55–69 (KTEEGLQGHDHKEVA) show a composition bias toward basic and acidic residues. The residue at position 319 (Ser319) is a Phosphoserine.

The protein belongs to the CIA30 family. In terms of assembly, part of the mitochondrial complex I assembly/MCIA complex that comprises at least the core subunits TMEM126B, NDUFAF1, ECSIT and ACAD9 and complement subunits such as COA1 and TMEM186. Interacts with ECSIT. Interacts with ACAD9. At early stages of complex I assembly, it is found in intermediate subcomplexes that contain different subunits including NDUFB6, NDUFA6, NDUFA9, NDUFS3, NDUFS7, ND1, ND2 and ND3. Interacts with TMEM70 and TMEM242.

The protein localises to the mitochondrion. It is found in the mitochondrion matrix. Its function is as follows. As part of the MCIA complex, involved in the assembly of the mitochondrial complex I. The protein is Complex I intermediate-associated protein 30, mitochondrial of Mus musculus (Mouse).